Reading from the N-terminus, the 921-residue chain is Isoleucine--tRNA ligase (921 aa).

Positions 59 to 69 (PYANGHLHIGH) match the 'HIGH' region motif. E569 is an L-isoleucyl-5'-AMP binding site. A 'KMSKS' region motif is present at residues 610 to 614 (KMSKS). K613 is an ATP binding site. Positions 896, 899, 911, and 914 each coordinate Zn(2+).

Belongs to the class-I aminoacyl-tRNA synthetase family. IleS type 1 subfamily. As to quaternary structure, monomer. Zn(2+) is required as a cofactor.

The protein resides in the cytoplasm. It carries out the reaction tRNA(Ile) + L-isoleucine + ATP = L-isoleucyl-tRNA(Ile) + AMP + diphosphate. Its function is as follows. Catalyzes the attachment of isoleucine to tRNA(Ile). As IleRS can inadvertently accommodate and process structurally similar amino acids such as valine, to avoid such errors it has two additional distinct tRNA(Ile)-dependent editing activities. One activity is designated as 'pretransfer' editing and involves the hydrolysis of activated Val-AMP. The other activity is designated 'posttransfer' editing and involves deacylation of mischarged Val-tRNA(Ile). This Campylobacter hominis (strain ATCC BAA-381 / DSM 21671 / CCUG 45161 / LMG 19568 / NCTC 13146 / CH001A) protein is Isoleucine--tRNA ligase.